The following is a 716-amino-acid chain: Protein C-mannosyl-transferase DPY19L3 (716 aa).

Residues 1–43 are Cytoplasmic-facing; sequence MMSIRQRREIRATEVSEDFPAQEENVKLENKLPSGCTSRRLWK. A helical membrane pass occupies residues 44–64; that stretch reads ILSLTIGGTIALCIGLLTSVY. Topologically, residues 65–154 are lumenal; sequence LATLHENDLW…RVLPVQKYLE (90 aa). An N-linked (GlcNAc...) asparagine glycan is attached at N118. A helical transmembrane segment spans residues 155-182; that stretch reads PVYFYIYTLFGLQAIYVTALYITSWLLS. The Cytoplasmic segment spans residues 183–184; it reads GT. The name=3 intramembrane region spans 185–197; it reads WLSGLLAAFWYVT. Topologically, residues 198-215 are cytoplasmic; it reads NRIDTTRVEFTIPLRENW. The name=4 intramembrane region spans 216–230; sequence ALPFFAIQIAAITYF. Residues 231 to 239 lie on the Cytoplasmic side of the membrane; that stretch reads LRPNLQPLS. A helical transmembrane segment spans residues 240–256; sequence ERLTLLAIFISTFLFSL. Over 257–262 the chain is Lumenal; it reads TWQFNQ. The helical transmembrane segment at 263–279 threads the bilayer; the sequence is FMMLMQALVLFTLDSLD. Topologically, residues 280 to 289 are cytoplasmic; that stretch reads MLPAVKATWL. The chain crosses the membrane as a helical span at residues 290–306; sequence YGIQITSLLLVCILQFF. Residues 307–308 lie on the Lumenal side of the membrane; sequence NS. Residues 309-323 traverse the membrane as a helical segment; it reads MILGSLLISFNLSVF. Over 324–338 the chain is Cytoplasmic; sequence IARKLQKNLKTGSFL. The helical transmembrane segment at 339–359 threads the bilayer; sequence NRLGKLLLHLFMVLCLTLFLN. Residues 360–414 lie on the Lumenal side of the membrane; that stretch reads NIIKKILNLKSDEHIFKFLKAKFGLGATRDFDANLYLCEEAFGLLPFNTFGRLSD. A helical membrane pass occupies residues 415–437; the sequence is TLLFYAYIFVLSITVIVAFVVAF. The Cytoplasmic portion of the chain corresponds to 438–465; that stretch reads HNLSDSTNQQSVGKMEKGTVDLKPETAY. Residues 466 to 485 traverse the membrane as a helical segment; it reads NLIHTILFGFLALSTMRMKY. Residues 486–487 are Lumenal-facing; sequence LW. A helical transmembrane segment spans residues 488–499; sequence TSHMCVFASFGL. The Cytoplasmic portion of the chain corresponds to 500–522; sequence CSPEIWELLLKSVHLYNPKRICI. A helical transmembrane segment spans residues 523–539; the sequence is MRYSVPILILLYLCYKF. The Lumenal segment spans residues 540-716; that stretch reads WPGMMDELSE…FHVYKLSRNK (177 aa). An N-linked (GlcNAc...) asparagine glycan is attached at N704.

This sequence belongs to the dpy-19 family.

Its subcellular location is the endoplasmic reticulum membrane. It carries out the reaction L-tryptophyl-[protein] + a di-trans,poly-cis-dolichyl beta-D-mannosyl phosphate = C-alpha-D-mannosyl-L-tryptophyl-[protein] + a di-trans,poly-cis-dolichyl phosphate + H(+). It participates in protein modification; protein glycosylation. In terms of biological role, C-mannosyltransferase that mediates C-mannosylation of tryptophan residues on target proteins. The reaction occurs on the luminal side of the endoplasmic reticulum and involves the transfer of a mannose unit from a dolichylphosphate mannose (Dol-P-Man) donor to an acceptor protein containing a WxxW or WxxC consensus sequence. C-mannosylates RSPO1, a Wnt signaling regulator, preferentially at the first Trp residue in the sequence WxxW. C-mannosylates the netrin receptor UNC5A, preferentially at the third tryptophan of WxxWxxWxxC sequence. This Pongo abelii (Sumatran orangutan) protein is Protein C-mannosyl-transferase DPY19L3 (DPY19L3).